A 623-amino-acid polypeptide reads, in one-letter code: Xaa-Pro aminopeptidase 1 (623 aa).

Position 77 (arginine 77) interacts with a peptide. Lysine 304 carries the N6-acetyllysine modification. Histidine 395 lines the a peptide pocket. The Mn(2+) site is built by aspartate 415, aspartate 426, and histidine 489. Positions 489, 498, and 523 each coordinate a peptide. Glutamate 523 and glutamate 537 together coordinate Mn(2+).

Belongs to the peptidase M24B family. As to quaternary structure, homodimer. Mn(2+) is required as a cofactor.

It is found in the cytoplasm. The protein localises to the cytosol. The enzyme catalyses Release of any N-terminal amino acid, including proline, that is linked to proline, even from a dipeptide or tripeptide.. Metalloaminopeptidase that catalyzes the removal of a penultimate prolyl residue from the N-termini of peptides, such as Arg-Pro-Pro. Contributes to the degradation of bradykinin. This Bos taurus (Bovine) protein is Xaa-Pro aminopeptidase 1 (XPNPEP1).